A 398-amino-acid polypeptide reads, in one-letter code: Cystathionine gamma-lyase (398 aa).

Positions 61, 113, and 118 each coordinate substrate. Lys211 is subject to N6-(pyridoxal phosphate)lysine. Residue Glu338 coordinates substrate.

It belongs to the trans-sulfuration enzymes family. As to quaternary structure, homotetramer. Interacts with CALM in a calcium-dependent manner. Requires pyridoxal 5'-phosphate as cofactor. As to expression, detected in liver and kidney, and at lower levels in small intestine (at protein level). Highly expressed in liver, kidney and lung, detected at lower levels in stomach, small intestine and adipose tissue, and hardly found in heart, bone, and thymus.

The protein resides in the cytoplasm. It catalyses the reaction L,L-cystathionine + H2O = 2-oxobutanoate + L-cysteine + NH4(+). The catalysed reaction is L-cysteine + H2O = hydrogen sulfide + pyruvate + NH4(+) + H(+). The enzyme catalyses L-homocysteine + H2O = 2-oxobutanoate + hydrogen sulfide + NH4(+) + H(+). It carries out the reaction L-homoserine = 2-oxobutanoate + NH4(+). It catalyses the reaction L-selenocystathionine + H2O = L-selenocysteine + 2-oxobutanoate + NH4(+). The protein operates within amino-acid biosynthesis; L-cysteine biosynthesis; L-cysteine from L-homocysteine and L-serine: step 2/2. Activated by calmodulin in the presence of calcium ions. Catalyzes the last step in the trans-sulfuration pathway from L-methionine to L-cysteine in a pyridoxal-5'-phosphate (PLP)-dependent manner, which consists on cleaving the L,L-cystathionine molecule into L-cysteine, ammonia and 2-oxobutanoate. Part of the L-cysteine derived from the trans-sulfuration pathway is utilized for biosynthesis of the ubiquitous antioxidant glutathione. Besides its role in the conversion of L-cystathionine into L-cysteine, it utilizes L-cysteine and L-homocysteine as substrates (at much lower rates than L,L-cystathionine) to produce hydrogen sulfide (H2S). In vitro, it converts two L-cysteine molecules into lanthionine and H2S, and two L-homocysteine molecules to homolanthionine and H2S, which can be particularly relevant under conditions of severe hyperhomocysteinemia. Lanthionine and homolanthionine are structural homologs of L,L-cystathionine that differ by the absence or presence of an extra methylene group, respectively. Acts as a cysteine-protein sulfhydrase by mediating sulfhydration of target proteins: sulfhydration consists of converting -SH groups into -SSH on specific cysteine residues of target proteins such as GAPDH, PTPN1 and NF-kappa-B subunit RELA, thereby regulating their function. By generating the gasotransmitter H2S, it participates in a number of physiological processes such as vasodilation, bone protection, and inflammation. Plays an essential role in myogenesis by contributing to the biogenesis of H2S in skeletal muscle tissue. Can also accept homoserine as substrate. Catalyzes the elimination of selenocystathionine (which can be derived from the diet) to yield selenocysteine, ammonia and 2-oxobutanoate. The protein is Cystathionine gamma-lyase (Cth) of Mus musculus (Mouse).